A 148-amino-acid chain; its full sequence is UPF0756 membrane protein NMCC_1816 (148 aa).

The next 4 membrane-spanning stretches (helical) occupy residues Leu13–Met35, His50–Gly70, Phe80–Gly100, and Val121–Leu141.

Belongs to the UPF0756 family.

It is found in the cell membrane. In Neisseria meningitidis serogroup C (strain 053442), this protein is UPF0756 membrane protein NMCC_1816.